A 411-amino-acid polypeptide reads, in one-letter code: Acetylornithine aminotransferase (411 aa).

Pyridoxal 5'-phosphate-binding positions include 107 to 108 and Phe-141; that span reads GT. Arg-144 lines the N(2)-acetyl-L-ornithine pocket. 227-230 is a pyridoxal 5'-phosphate binding site; it reads DEIQ. An N6-(pyridoxal phosphate)lysine modification is found at Lys-256. Thr-284 provides a ligand contact to N(2)-acetyl-L-ornithine. Thr-285 provides a ligand contact to pyridoxal 5'-phosphate.

It belongs to the class-III pyridoxal-phosphate-dependent aminotransferase family. ArgD subfamily. In terms of assembly, homodimer. It depends on pyridoxal 5'-phosphate as a cofactor.

It localises to the cytoplasm. The enzyme catalyses N(2)-acetyl-L-ornithine + 2-oxoglutarate = N-acetyl-L-glutamate 5-semialdehyde + L-glutamate. The protein operates within amino-acid biosynthesis; L-arginine biosynthesis; N(2)-acetyl-L-ornithine from L-glutamate: step 4/4. This chain is Acetylornithine aminotransferase, found in Xylella fastidiosa (strain Temecula1 / ATCC 700964).